The following is a 156-amino-acid chain: 2-C-methyl-D-erythritol 2,4-cyclodiphosphate synthase (156 aa).

Residues Asp-9 and His-11 each coordinate a divalent metal cation. Residues 9–11 and 35–36 each bind 4-CDP-2-C-methyl-D-erythritol 2-phosphate; these read DAH and HS. His-43 lines the a divalent metal cation pocket. 57–59 contacts 4-CDP-2-C-methyl-D-erythritol 2-phosphate; sequence DIG.

The protein belongs to the IspF family. As to quaternary structure, homotrimer. Requires a divalent metal cation as cofactor.

The catalysed reaction is 4-CDP-2-C-methyl-D-erythritol 2-phosphate = 2-C-methyl-D-erythritol 2,4-cyclic diphosphate + CMP. Its pathway is isoprenoid biosynthesis; isopentenyl diphosphate biosynthesis via DXP pathway; isopentenyl diphosphate from 1-deoxy-D-xylulose 5-phosphate: step 4/6. Functionally, involved in the biosynthesis of isopentenyl diphosphate (IPP) and dimethylallyl diphosphate (DMAPP), two major building blocks of isoprenoid compounds. Catalyzes the conversion of 4-diphosphocytidyl-2-C-methyl-D-erythritol 2-phosphate (CDP-ME2P) to 2-C-methyl-D-erythritol 2,4-cyclodiphosphate (ME-CPP) with a corresponding release of cytidine 5-monophosphate (CMP). In Hydrogenobaculum sp. (strain Y04AAS1), this protein is 2-C-methyl-D-erythritol 2,4-cyclodiphosphate synthase.